Reading from the N-terminus, the 176-residue chain is Small capsomere-interacting protein (176 aa).

Disordered stretches follow at residues 75–109 (DKRQ…ASAG) and 148–176 (ASAA…RKKQ). Residues 80–109 (ASVAGAGAHAHLGGSSATPVQQAQAAASAG) are compositionally biased toward low complexity.

The protein belongs to the herpesviridae small capsomere-interacting protein family. Interacts with the major capsid protein/MCP.

Its subcellular location is the virion. It localises to the host nucleus. Functionally, participates in the assembly of the infectious particles by decorating the outer surface of the capsid shell and thus forming a layer between the capsid and the tegument. Complexes composed of the major capsid protein and small capsomere-interacting protein/SCP assemble together in the host cytoplasm and are translocated to the nucleus, where they accumulate and participate in capsid assembly. In Epstein-Barr virus (strain B95-8) (HHV-4), this protein is Small capsomere-interacting protein.